The primary structure comprises 177 residues: Large ribosomal subunit protein uL6 (177 aa).

Belongs to the universal ribosomal protein uL6 family. As to quaternary structure, part of the 50S ribosomal subunit.

Its function is as follows. This protein binds to the 23S rRNA, and is important in its secondary structure. It is located near the subunit interface in the base of the L7/L12 stalk, and near the tRNA binding site of the peptidyltransferase center. This chain is Large ribosomal subunit protein uL6, found in Serratia proteamaculans (strain 568).